Here is a 288-residue protein sequence, read N- to C-terminus: Hyaluronidase (288 aa).

N-linked (GlcNAc...) asparagine glycosylation occurs at N36. The Proton donor role is filled by E66. C142 and C154 are disulfide-bonded. N282 is a glycosylation site (N-linked (GlcNAc...) asparagine).

Belongs to the glycosyl hydrolase 56 family. In terms of tissue distribution, expressed by the venom gland.

Its subcellular location is the secreted. The enzyme catalyses Random hydrolysis of (1-&gt;4)-linkages between N-acetyl-beta-D-glucosamine and D-glucuronate residues in hyaluronate.. Functionally, hydrolyzes high molecular weight hyaluronic acid to produce small oligosaccharides. This is Hyaluronidase from Polybia paulista (Neotropical social wasp).